A 372-amino-acid chain; its full sequence is NAD(P)H-quinone oxidoreductase subunit 1 (372 aa).

8 consecutive transmembrane segments (helical) span residues 27–47, 97–117, 128–148, 176–196, 204–224, 266–286, 308–328, and 347–367; these read IIWLPLPMLLVLVSAVVGVLV, ILFTAGPILVLVPVILSWLIV, VGIGIFLWIALSSIQPIGLLM, LALSVLAIVLMTNSLSTIDIV, ILSWNIWRQPVGFIIFWICAL, ILSALLVSILYLGGWGFPIPV, SIGIIMTVLKAYLLVFVAILL, and FLLPISLANLLVTAGLKLAFP.

This sequence belongs to the complex I subunit 1 family. As to quaternary structure, NDH-1 is composed of at least 11 different subunits.

The protein localises to the cellular thylakoid membrane. It catalyses the reaction a plastoquinone + NADH + (n+1) H(+)(in) = a plastoquinol + NAD(+) + n H(+)(out). The catalysed reaction is a plastoquinone + NADPH + (n+1) H(+)(in) = a plastoquinol + NADP(+) + n H(+)(out). Its function is as follows. NDH-1 shuttles electrons from an unknown electron donor, via FMN and iron-sulfur (Fe-S) centers, to quinones in the respiratory and/or the photosynthetic chain. The immediate electron acceptor for the enzyme in this species is believed to be plastoquinone. Couples the redox reaction to proton translocation, and thus conserves the redox energy in a proton gradient. This Prochlorococcus marinus subsp. pastoris (strain CCMP1986 / NIES-2087 / MED4) protein is NAD(P)H-quinone oxidoreductase subunit 1.